Here is a 480-residue protein sequence, read N- to C-terminus: tRNA-2-methylthio-N(6)-dimethylallyladenosine synthase (480 aa).

The MTTase N-terminal domain occupies 25–145; the sequence is GVFYVHTLGC…LPQLLDQARI (121 aa). Residues C34, C74, C108, C182, C186, and C189 each coordinate [4Fe-4S] cluster. The Radical SAM core domain occupies 168 to 397; sequence RASKVSSWVA…VALQERITEE (230 aa). The region spanning 400–470 is the TRAM domain; sequence KTFEGRDVEV…RHNLIADPNP (71 aa).

It belongs to the methylthiotransferase family. MiaB subfamily. As to quaternary structure, monomer. [4Fe-4S] cluster serves as cofactor.

It localises to the cytoplasm. It carries out the reaction N(6)-dimethylallyladenosine(37) in tRNA + (sulfur carrier)-SH + AH2 + 2 S-adenosyl-L-methionine = 2-methylsulfanyl-N(6)-dimethylallyladenosine(37) in tRNA + (sulfur carrier)-H + 5'-deoxyadenosine + L-methionine + A + S-adenosyl-L-homocysteine + 2 H(+). In terms of biological role, catalyzes the methylthiolation of N6-(dimethylallyl)adenosine (i(6)A), leading to the formation of 2-methylthio-N6-(dimethylallyl)adenosine (ms(2)i(6)A) at position 37 in tRNAs that read codons beginning with uridine. This chain is tRNA-2-methylthio-N(6)-dimethylallyladenosine synthase, found in Bifidobacterium adolescentis (strain ATCC 15703 / DSM 20083 / NCTC 11814 / E194a).